The following is a 54-amino-acid chain: uncharacterized protein (54 aa).

Residues 1–54 (MWTLKARKEHTGISGKPTARTDRHGSTRSGDSELQASARRFSRLPDRCGAQGVT) form a disordered region.

This is an uncharacterized protein from Mycobacterium tuberculosis (strain ATCC 25618 / H37Rv).